A 257-amino-acid chain; its full sequence is Imidazole glycerol phosphate synthase subunit HisF (257 aa).

Residues D11 and D130 contribute to the active site.

Belongs to the HisA/HisF family. In terms of assembly, heterodimer of HisH and HisF.

The protein localises to the cytoplasm. The enzyme catalyses 5-[(5-phospho-1-deoxy-D-ribulos-1-ylimino)methylamino]-1-(5-phospho-beta-D-ribosyl)imidazole-4-carboxamide + L-glutamine = D-erythro-1-(imidazol-4-yl)glycerol 3-phosphate + 5-amino-1-(5-phospho-beta-D-ribosyl)imidazole-4-carboxamide + L-glutamate + H(+). Its pathway is amino-acid biosynthesis; L-histidine biosynthesis; L-histidine from 5-phospho-alpha-D-ribose 1-diphosphate: step 5/9. IGPS catalyzes the conversion of PRFAR and glutamine to IGP, AICAR and glutamate. The HisF subunit catalyzes the cyclization activity that produces IGP and AICAR from PRFAR using the ammonia provided by the HisH subunit. In Shewanella sp. (strain MR-7), this protein is Imidazole glycerol phosphate synthase subunit HisF.